Reading from the N-terminus, the 192-residue chain is Small ribosomal subunit protein uS5 (192 aa).

An S5 DRBM domain is found at 22-85 (LVDKLVTINR…DRAKRAMIRV (64 aa)).

The protein belongs to the universal ribosomal protein uS5 family. As to quaternary structure, part of the 30S ribosomal subunit. Contacts proteins S4 and S8.

With S4 and S12 plays an important role in translational accuracy. Its function is as follows. Located at the back of the 30S subunit body where it stabilizes the conformation of the head with respect to the body. The polypeptide is Small ribosomal subunit protein uS5 (Gluconacetobacter diazotrophicus (strain ATCC 49037 / DSM 5601 / CCUG 37298 / CIP 103539 / LMG 7603 / PAl5)).